Consider the following 181-residue polypeptide: Protein TrbB (181 aa).

Positions 1-22 are cleaved as a signal peptide; that stretch reads MSLTKSLLFTLLLSAAAVQAST. Positions 37–172 constitute a Thioredoxin domain; that stretch reads TQPAQPAAGT…FMARVDTVLQ (136 aa).

It localises to the periplasm. In Escherichia coli (strain K12), this protein is Protein TrbB (trbB).